The sequence spans 134 residues: ATP synthase epsilon chain (134 aa).

Belongs to the ATPase epsilon chain family. In terms of assembly, F-type ATPases have 2 components, CF(1) - the catalytic core - and CF(0) - the membrane proton channel. CF(1) has five subunits: alpha(3), beta(3), gamma(1), delta(1), epsilon(1). CF(0) has three main subunits: a, b and c.

It is found in the cell inner membrane. Its function is as follows. Produces ATP from ADP in the presence of a proton gradient across the membrane. The protein is ATP synthase epsilon chain of Rhodospirillum rubrum (strain ATCC 11170 / ATH 1.1.1 / DSM 467 / LMG 4362 / NCIMB 8255 / S1).